The following is a 189-amino-acid chain: Potassium-transporting ATPase KdpC subunit (189 aa).

A helical transmembrane segment spans residues 10-30 (LTLVFCVFFSVCYILVLWIFA).

Belongs to the KdpC family. As to quaternary structure, the system is composed of three essential subunits: KdpA, KdpB and KdpC.

The protein resides in the cell inner membrane. Its function is as follows. Part of the high-affinity ATP-driven potassium transport (or Kdp) system, which catalyzes the hydrolysis of ATP coupled with the electrogenic transport of potassium into the cytoplasm. This subunit acts as a catalytic chaperone that increases the ATP-binding affinity of the ATP-hydrolyzing subunit KdpB by the formation of a transient KdpB/KdpC/ATP ternary complex. The sequence is that of Potassium-transporting ATPase KdpC subunit from Phocaeicola vulgatus (strain ATCC 8482 / DSM 1447 / JCM 5826 / CCUG 4940 / NBRC 14291 / NCTC 11154) (Bacteroides vulgatus).